The sequence spans 466 residues: Oxysterol-binding protein 4 (466 aa).

The span at 1–12 (MEIGTSSTTNNI) shows a compositional bias: polar residues. The interval 1 to 67 (MEIGTSSTTN…STSPPSPPIE (67 aa)) is disordered. Positions 24–45 (NNNNHNNNSSNNSSNNNSISSS) are enriched in low complexity. The span at 46 to 60 (PTDSSQLMNGEQSTS) shows a compositional bias: polar residues.

The protein belongs to the OSBP family.

The chain is Oxysterol-binding protein 4 (osbD) from Dictyostelium discoideum (Social amoeba).